Here is a 312-residue protein sequence, read N- to C-terminus: sn-1-specific diacylglycerol lipase ABHD11 (312 aa).

A mitochondrion-targeting transit peptide spans 1–14 (MITFKSFHCSRGWH). An AB hydrolase-1 domain is found at 62-297 (PPLVLLHGLF…GAGHWVHADK (236 aa)). Catalysis depends on charge relay system residues Ser136, Glu232, and His291.

Belongs to the AB hydrolase superfamily. In terms of processing, phosphorylated.

The protein resides in the mitochondrion. It localises to the mitochondrion matrix. It catalyses the reaction 1-octadecanoyl-2-(5Z,8Z,11Z,14Z-eicosatetraenoyl)-sn-glycerol + H2O = 2-(5Z,8Z,11Z,14Z-eicosatetraenoyl)-glycerol + octadecanoate + H(+). The enzyme catalyses a 1,2-diacyl-sn-glycerol + H2O = a 2-acylglycerol + a fatty acid + H(+). The catalysed reaction is a 1,3-diacyl-sn-glycerol + H2O = a 1-acyl-sn-glycerol + a fatty acid + H(+). It carries out the reaction 1-octadecanoyl-2-(9Z-octadecenoyl)-sn-glycerol + H2O = 2-(9Z-octadecenoyl)-glycerol + octadecanoate + H(+). It catalyses the reaction 1-octadecanoyl-2-(4Z,7Z,10Z,13Z,16Z,19Z-docosahexaenoyl)-sn-glycerol + H2O = 2-(4Z,7Z,10Z,13Z,16Z,19Z-docosahexaenoyl)-glycerol + octadecanoate + H(+). The enzyme catalyses 1,2-didecanoylglycerol + H2O = decanoylglycerol + decanoate + H(+). Its function is as follows. Catalyzes the hydrolysis of diacylglycerol in vitro and may function as a key regulator in lipid metabolism, namely by regulating the intracellular levels of diacylglycerol. 1,2-diacyl-sn-glycerols are the preferred substrate over 1,3-diacyl-sn-glycerols. The enzyme hydrolyzes stearate in preference to palmitate from the sn-1 position of 1,2-diacyl-sn-glycerols. The polypeptide is sn-1-specific diacylglycerol lipase ABHD11 (Xenopus laevis (African clawed frog)).